A 229-amino-acid polypeptide reads, in one-letter code: NAD(P)H-hydrate epimerase (229 aa).

The 208-residue stretch at 10 to 217 (AINVDQELFN…ALQRKYDLNL (208 aa)) folds into the YjeF N-terminal domain. 60–64 (NNGGD) serves as a coordination point for (6S)-NADPHX. K(+) contacts are provided by N61 and D125. Residues 129-135 (GFSFKPP) and D158 each bind (6S)-NADPHX. S161 provides a ligand contact to K(+).

It belongs to the NnrE/AIBP family. It depends on K(+) as a cofactor.

It catalyses the reaction (6R)-NADHX = (6S)-NADHX. It carries out the reaction (6R)-NADPHX = (6S)-NADPHX. In terms of biological role, catalyzes the epimerization of the S- and R-forms of NAD(P)HX, a damaged form of NAD(P)H that is a result of enzymatic or heat-dependent hydration. This is a prerequisite for the S-specific NAD(P)H-hydrate dehydratase to allow the repair of both epimers of NAD(P)HX. This is NAD(P)H-hydrate epimerase from Drosophila ananassae (Fruit fly).